The chain runs to 361 residues: 3-dehydroquinate synthase (361 aa).

NAD(+)-binding positions include 106–110 (GVVGD), 130–131 (TT), lysine 143, and lysine 152. 3 residues coordinate Zn(2+): glutamate 185, histidine 247, and histidine 264.

This sequence belongs to the sugar phosphate cyclases superfamily. Dehydroquinate synthase family. Requires NAD(+) as cofactor. Co(2+) serves as cofactor. Zn(2+) is required as a cofactor.

It localises to the cytoplasm. It catalyses the reaction 7-phospho-2-dehydro-3-deoxy-D-arabino-heptonate = 3-dehydroquinate + phosphate. Its pathway is metabolic intermediate biosynthesis; chorismate biosynthesis; chorismate from D-erythrose 4-phosphate and phosphoenolpyruvate: step 2/7. Its function is as follows. Catalyzes the conversion of 3-deoxy-D-arabino-heptulosonate 7-phosphate (DAHP) to dehydroquinate (DHQ). The protein is 3-dehydroquinate synthase of Gloeobacter violaceus (strain ATCC 29082 / PCC 7421).